A 130-amino-acid polypeptide reads, in one-letter code: Small ribosomal subunit protein uS9 (130 aa).

It belongs to the universal ribosomal protein uS9 family.

The protein is Small ribosomal subunit protein uS9 of Polaromonas naphthalenivorans (strain CJ2).